The following is a 61-amino-acid chain: UPF0181 protein Ent638_2380 (61 aa).

This sequence belongs to the UPF0181 family.

This chain is UPF0181 protein Ent638_2380, found in Enterobacter sp. (strain 638).